Consider the following 456-residue polypeptide: E3 ubiquitin-protein ligase RNF25 (456 aa).

In terms of domain architecture, RWD spans 18-127 (SEVEVLESIY…EKGKEILTDN (110 aa)). Zn(2+)-binding residues include cysteine 134, cysteine 137, cysteine 152, histidine 154, histidine 157, cysteine 160, cysteine 195, and cysteine 198. The segment at 134 to 199 (CVICLYGFQE…AVGVQCPVCR (66 aa)) adopts an RING-type zinc-finger fold. The tract at residues 269 to 456 (LEPESAVDVS…PLGLESEEGS (188 aa)) is disordered. Polar residues predominate over residues 288-332 (SAEQSTSLADQSTLPTSLPMTTQYTYEKTSGAGPNQQRPGETQKS). Composition is skewed to basic and acidic residues over residues 364–388 (SEIH…EPRN) and 410–421 (RTRDCARWERSK).

The protein belongs to the RNF25 family. Interacts with UBE2D2, and may also interact with UBE2E1 and UBE2E3. Interacts with RELA/p65. In terms of processing, ubiquitinated; autoubiquitinated. As to expression, ubiquitous.

It localises to the cytoplasm. It carries out the reaction S-ubiquitinyl-[E2 ubiquitin-conjugating enzyme]-L-cysteine + [acceptor protein]-L-lysine = [E2 ubiquitin-conjugating enzyme]-L-cysteine + N(6)-ubiquitinyl-[acceptor protein]-L-lysine.. Its pathway is protein modification; protein ubiquitination. E3 ubiquitin-protein ligase that plays a key role in the RNF14-RNF25 translation quality control pathway, a pathway that takes place when a ribosome has stalled during translation, and which promotes ubiquitination and degradation of translation factors on stalled ribosomes. Catalyzes ubiquitination of RPS27A in response to ribosome collisions, promoting activation of RNF14. RNF25 catalyzes ubiquitination of other ribosomal proteins on stalled ribosomes, such as RPL0, RPL1, RPL12, RPS13 and RPS17. Also involved in ubiquitination and degradation of stalled ETF1/eRF1. Independently of its function in the response to stalled ribosomes, mediates ubiquitination and subsequent proteasomal degradation of NKD2. May also stimulate transcription mediated by NF-kappa-B via its interaction with RELA/p65. The protein is E3 ubiquitin-protein ligase RNF25 of Mus musculus (Mouse).